We begin with the raw amino-acid sequence, 348 residues long: MISPCSPPLEPPVPPPETPASQALSIPLPPLPLNLPELAFPPSSFQASVPPPPPLPPPPRTTGFAPPHVFGLEKSQLLKEALERAGPAPGSREDVKRLLKLHKDRFRSDLQWILFCADLPSLIQEGPQCGLVALWMAGTLLAPPGGTPLERLVQVAMERGYTAQGEMFSVADMGRLAQEALGCQAEVLCGGLGGPNRDHVLQHIVAGHPLLIPYDEDFNHEPCQRRGHKAHWAVSAGVLLGVQHVPSLGYSEDPELPGLFHPVPGTPHQPPSLPEEGSPGAVYLLAKQGKSWHHQLWDYDQVRDSNLQLTDFSPSRAADGREYVVPAGGVRAGLCGQALLLRPQDSSH.

Positions 1–18 (MISPCSPPLEPPVPPPET) are enriched in pro residues. The segment at 1 to 64 (MISPCSPPLE…LPPPPRTTGF (64 aa)) is disordered. Low complexity predominate over residues 34–48 (NLPELAFPPSSFQAS). Over residues 49–60 (VPPPPPLPPPPR) the composition is skewed to pro residues. The segment at 121-241 (SLIQEGPQCG…WAVSAGVLLG (121 aa)) is peptidase C39-like. The active site involves Cys129. At Ser313 the chain carries Phosphoserine.

It belongs to the ACTMAP family. Interacts (via N-terminus) with PFN2; the interaction may facilitate efficient cleavage of the acetylated N-terminus of immature actin. Interacts with PFN1.

It is found in the cytoplasm. It carries out the reaction N-terminal N(alpha)-acetyl-L-methionyl-L-aspartyl-[protein] + H2O = N-terminal L-aspartyl-[protein] + N-acetyl-L-methionine. The catalysed reaction is N-terminal N(alpha)-acetyl-L-methionyl-L-glutamyl-[protein] + H2O = N-terminal L-glutamyl-[protein] + N-acetyl-L-methionine. It catalyses the reaction N-terminal N(alpha)-acetyl-L-cysteinyl-L-aspartyl-[protein] + H2O = N-terminal L-aspartyl-[protein] + N-acetyl-L-cysteine. The enzyme catalyses N-terminal N(alpha)-acetyl-L-cysteinyl-L-glutamyl-[protein] + H2O = N-terminal L-glutamyl-[protein] + N-acetyl-L-cysteine. Functionally, actin maturation protease that specifically mediates the cleavage of immature acetylated N-terminal actin, thereby contributing to actin maturation. Cleaves N-terminal acetylated methionine of immature cytoplasmic beta- and gamma-actins ACTB and ACTG1 after translation. Cleaves N-terminal acetylated cysteine of muscle alpha-actins ACTA1, ACTC1 and ACTA2 after canonical removal of N-terminal methionine. The polypeptide is Actin maturation protease (Bos taurus (Bovine)).